We begin with the raw amino-acid sequence, 277 residues long: Large ribosomal subunit protein uL2 (277 aa).

A disordered region spans residues 226–277 (NPIDHPHGGGEGRTSGGRHPVTPWGKPTKGKKTRSNKSTNKFILISRHKRKK).

It belongs to the universal ribosomal protein uL2 family. In terms of assembly, part of the 50S ribosomal subunit. Forms a bridge to the 30S subunit in the 70S ribosome.

Functionally, one of the primary rRNA binding proteins. Required for association of the 30S and 50S subunits to form the 70S ribosome, for tRNA binding and peptide bond formation. It has been suggested to have peptidyltransferase activity; this is somewhat controversial. Makes several contacts with the 16S rRNA in the 70S ribosome. This chain is Large ribosomal subunit protein uL2, found in Rhodopseudomonas palustris (strain BisA53).